The chain runs to 319 residues: NADH-quinone oxidoreductase subunit H 1 (319 aa).

The next 8 helical transmembrane spans lie at 1–21 (MIGLIITATISVTLIMVLLVV), 74–94 (FAYILAPAVAATPVLAGFGVI), 107–127 (VGVLFLIGMLGLTAYAVVLGA), 147–167 (LAYEVFLGLSLMGAVMLAGSL), 179–199 (VWFVVLQPLGAALFCIAGVAA), 238–258 (VLLVSALAVTLFFGGWLGPWL), 262–282 (IWFGLKTGVIAVVFVWLRATL), and 293–313 (FAWKIALPLSLANLLLTGIVV).

It belongs to the complex I subunit 1 family. In terms of assembly, NDH-1 is composed of 14 different subunits. Subunits NuoA, H, J, K, L, M, N constitute the membrane sector of the complex.

Its subcellular location is the cell inner membrane. It catalyses the reaction a quinone + NADH + 5 H(+)(in) = a quinol + NAD(+) + 4 H(+)(out). Functionally, NDH-1 shuttles electrons from NADH, via FMN and iron-sulfur (Fe-S) centers, to quinones in the respiratory chain. The immediate electron acceptor for the enzyme in this species is believed to be ubiquinone. Couples the redox reaction to proton translocation (for every two electrons transferred, four hydrogen ions are translocated across the cytoplasmic membrane), and thus conserves the redox energy in a proton gradient. This subunit may bind ubiquinone. The polypeptide is NADH-quinone oxidoreductase subunit H 1 (Rhodopseudomonas palustris (strain BisB5)).